The sequence spans 429 residues: Enolase (429 aa).

Gln-168 contacts (2R)-2-phosphoglycerate. Glu-210 acts as the Proton donor in catalysis. Mg(2+) is bound by residues Asp-247, Glu-288, and Asp-315. Residues Lys-340, Arg-369, Ser-370, and Lys-391 each contribute to the (2R)-2-phosphoglycerate site. Lys-340 acts as the Proton acceptor in catalysis.

It belongs to the enolase family. It depends on Mg(2+) as a cofactor.

It is found in the cytoplasm. It localises to the secreted. The protein localises to the cell surface. The enzyme catalyses (2R)-2-phosphoglycerate = phosphoenolpyruvate + H2O. It functions in the pathway carbohydrate degradation; glycolysis; pyruvate from D-glyceraldehyde 3-phosphate: step 4/5. In terms of biological role, catalyzes the reversible conversion of 2-phosphoglycerate (2-PG) into phosphoenolpyruvate (PEP). It is essential for the degradation of carbohydrates via glycolysis. The sequence is that of Enolase from Trichormus variabilis (strain ATCC 29413 / PCC 7937) (Anabaena variabilis).